Consider the following 490-residue polypeptide: ATP synthase subunit alpha 1 (490 aa).

171 to 178 serves as a coordination point for ATP; sequence GDNGLGKS.

This sequence belongs to the ATPase alpha/beta chains family. As to quaternary structure, F-type ATPases have 2 components, CF(1) - the catalytic core - and CF(0) - the membrane proton channel. CF(1) has five subunits: alpha(3), beta(3), gamma(1), delta(1), epsilon(1). CF(0) has three main subunits: a(1), b(2) and c(9-12). The alpha and beta chains form an alternating ring which encloses part of the gamma chain. CF(1) is attached to CF(0) by a central stalk formed by the gamma and epsilon chains, while a peripheral stalk is formed by the delta and b chains.

Its subcellular location is the cell inner membrane. It carries out the reaction ATP + H2O + 4 H(+)(in) = ADP + phosphate + 5 H(+)(out). Its function is as follows. Produces ATP from ADP in the presence of a proton gradient across the membrane. The alpha chain is a regulatory subunit. This chain is ATP synthase subunit alpha 1, found in Legionella pneumophila (strain Corby).